Consider the following 464-residue polypeptide: Protein FAM90A15 (464 aa).

Disordered stretches follow at residues 1–42, 70–389, and 415–437; these read MMAR…DPRL, PATL…HDGA, and HSPE…SEAP. 2 stretches are compositionally biased toward basic and acidic residues: residues 74–89 and 97–114; these read GKKE…KPRV and NKDK…DPQR. Low complexity predominate over residues 180 to 197; the sequence is LASLSPLRKASLSSSSSL.

This sequence belongs to the FAM90 family.

This is Protein FAM90A15 from Homo sapiens (Human).